The chain runs to 689 residues: Glycine--tRNA ligase beta subunit (689 aa).

This sequence belongs to the class-II aminoacyl-tRNA synthetase family. As to quaternary structure, tetramer of two alpha and two beta subunits.

The protein localises to the cytoplasm. It carries out the reaction tRNA(Gly) + glycine + ATP = glycyl-tRNA(Gly) + AMP + diphosphate. In Shewanella sp. (strain W3-18-1), this protein is Glycine--tRNA ligase beta subunit.